An 845-amino-acid polypeptide reads, in one-letter code: Protein translocase subunit SecA 1 (845 aa).

ATP is bound by residues Q85, 103–107 (GEGKT), and D492.

Belongs to the SecA family. In terms of assembly, monomer and homodimer. Part of the essential Sec protein translocation apparatus which comprises SecA, SecYEG and auxiliary proteins SecDF. Other proteins may also be involved.

It localises to the cell membrane. The protein localises to the cytoplasm. The enzyme catalyses ATP + H2O + cellular proteinSide 1 = ADP + phosphate + cellular proteinSide 2.. Its function is as follows. Part of the Sec protein translocase complex. Interacts with the SecYEG preprotein conducting channel. Has a central role in coupling the hydrolysis of ATP to the transfer of proteins into and across the cell membrane, serving as an ATP-driven molecular motor driving the stepwise translocation of polypeptide chains across the membrane. This chain is Protein translocase subunit SecA 1, found in Corynebacterium efficiens (strain DSM 44549 / YS-314 / AJ 12310 / JCM 11189 / NBRC 100395).